The sequence spans 145 residues: 3-hydroxyacyl-[acyl-carrier-protein] dehydratase FabZ (145 aa).

The active site involves H47.

The protein belongs to the thioester dehydratase family. FabZ subfamily.

It localises to the cytoplasm. It catalyses the reaction a (3R)-hydroxyacyl-[ACP] = a (2E)-enoyl-[ACP] + H2O. Its function is as follows. Involved in unsaturated fatty acids biosynthesis. Catalyzes the dehydration of short chain beta-hydroxyacyl-ACPs and long chain saturated and unsaturated beta-hydroxyacyl-ACPs. The polypeptide is 3-hydroxyacyl-[acyl-carrier-protein] dehydratase FabZ (Aromatoleum aromaticum (strain DSM 19018 / LMG 30748 / EbN1) (Azoarcus sp. (strain EbN1))).